Reading from the N-terminus, the 219-residue chain is Protein OPG170 (219 aa).

Residues 1-16 form the signal peptide; it reads MYSLVFVILMCIPFSF. A glycan (N-linked (GlcNAc...) asparagine; by host) is linked at N70.

The protein belongs to the orthopoxvirus OPG170 family.

The protein localises to the secreted. Its function is as follows. May interact with several cellular chemokines to interfere with chemokine-glycosaminoglycan (GAG) interactions at the cell surface to alter chemotaxis of nearby responsive cells. This chain is Protein OPG170 (OPG170), found in Bos taurus (Bovine).